A 317-amino-acid polypeptide reads, in one-letter code: Ribosomal large subunit pseudouridine synthase D (317 aa).

The 75-residue stretch at 15 to 89 (WRLDRALASL…IPLEIVFEDE (75 aa)) folds into the S4 RNA-binding domain. Asp141 is an active-site residue.

The protein belongs to the pseudouridine synthase RluA family.

The protein localises to the cytoplasm. The enzyme catalyses uridine(1911/1915/1917) in 23S rRNA = pseudouridine(1911/1915/1917) in 23S rRNA. In terms of biological role, responsible for synthesis of pseudouridine from uracil at positions 1911, 1915 and 1917 in 23S ribosomal RNA. This chain is Ribosomal large subunit pseudouridine synthase D, found in Zymomonas mobilis subsp. mobilis (strain ATCC 31821 / ZM4 / CP4).